Reading from the N-terminus, the 503-residue chain is Probable protein kinase UbiB (503 aa).

A helical transmembrane segment spans residues 13–35 (TFYRYRLAGLCASLMGSGWICAL). One can recognise a Protein kinase domain in the interval 120-491 (EFETEPIASA…QQRQSLWLAV (372 aa)). Residues 126–134 (IASASIAQV) and K148 contribute to the ATP site. The active-site Proton acceptor is the D283. A helical transmembrane segment spans residues 485–502 (QSLWLAVIAVVLLLILLL).

It belongs to the ABC1 family. UbiB subfamily.

Its subcellular location is the cell inner membrane. It functions in the pathway cofactor biosynthesis; ubiquinone biosynthesis [regulation]. In terms of biological role, is probably a protein kinase regulator of UbiI activity which is involved in aerobic coenzyme Q (ubiquinone) biosynthesis. This chain is Probable protein kinase UbiB, found in Neisseria meningitidis serogroup A / serotype 4A (strain DSM 15465 / Z2491).